Consider the following 361-residue polypeptide: Phosphoserine aminotransferase (361 aa).

An L-glutamate-binding site is contributed by Arg43. Pyridoxal 5'-phosphate is bound by residues 77–78, Trp103, Thr153, Asp173, and Gln196; that span reads AS. Residue Lys197 is modified to N6-(pyridoxal phosphate)lysine. 238–239 provides a ligand contact to pyridoxal 5'-phosphate; that stretch reads NT.

This sequence belongs to the class-V pyridoxal-phosphate-dependent aminotransferase family. SerC subfamily. Homodimer. Requires pyridoxal 5'-phosphate as cofactor.

It localises to the cytoplasm. The enzyme catalyses O-phospho-L-serine + 2-oxoglutarate = 3-phosphooxypyruvate + L-glutamate. The catalysed reaction is 4-(phosphooxy)-L-threonine + 2-oxoglutarate = (R)-3-hydroxy-2-oxo-4-phosphooxybutanoate + L-glutamate. It participates in amino-acid biosynthesis; L-serine biosynthesis; L-serine from 3-phospho-D-glycerate: step 2/3. Its pathway is cofactor biosynthesis; pyridoxine 5'-phosphate biosynthesis; pyridoxine 5'-phosphate from D-erythrose 4-phosphate: step 3/5. Functionally, catalyzes the reversible conversion of 3-phosphohydroxypyruvate to phosphoserine and of 3-hydroxy-2-oxo-4-phosphonooxybutanoate to phosphohydroxythreonine. The sequence is that of Phosphoserine aminotransferase from Stutzerimonas stutzeri (Pseudomonas stutzeri).